The following is a 331-amino-acid chain: D-alanine--D-alanine ligase (331 aa).

Residues 122–328 (KLWYDAIGIP…FHEFLADCIE (207 aa)) form the ATP-grasp domain. Residue 152 to 207 (AFDKWGKLFVKAARQGSSVGCYSVTKIEQLSDAIDKAFGFSHQVLVEKAVKPRELE) coordinates ATP. The Mg(2+) site is built by aspartate 282, glutamate 295, and asparagine 297.

The protein belongs to the D-alanine--D-alanine ligase family. Mg(2+) is required as a cofactor. Requires Mn(2+) as cofactor.

It localises to the cytoplasm. The enzyme catalyses 2 D-alanine + ATP = D-alanyl-D-alanine + ADP + phosphate + H(+). The protein operates within cell wall biogenesis; peptidoglycan biosynthesis. Functionally, cell wall formation. In Vibrio vulnificus (strain CMCP6), this protein is D-alanine--D-alanine ligase.